Reading from the N-terminus, the 160-residue chain is Cyclic pyranopterin monophosphate synthase (160 aa).

Substrate is bound by residues 74–76 and 112–113; these read LSH and ME. Asp127 is an active-site residue.

This sequence belongs to the MoaC family. Homohexamer; trimer of dimers.

It carries out the reaction (8S)-3',8-cyclo-7,8-dihydroguanosine 5'-triphosphate = cyclic pyranopterin phosphate + diphosphate. It functions in the pathway cofactor biosynthesis; molybdopterin biosynthesis. In terms of biological role, catalyzes the conversion of (8S)-3',8-cyclo-7,8-dihydroguanosine 5'-triphosphate to cyclic pyranopterin monophosphate (cPMP). In Trichlorobacter lovleyi (strain ATCC BAA-1151 / DSM 17278 / SZ) (Geobacter lovleyi), this protein is Cyclic pyranopterin monophosphate synthase.